Consider the following 255-residue polypeptide: Diphthine synthase (255 aa).

S-adenosyl-L-methionine contacts are provided by residues Leu9, Asp85, Val88, 113–114 (SI), Leu164, Ala207, and His232.

Belongs to the diphthine synthase family. Homodimer.

It carries out the reaction 2-[(3S)-amino-3-carboxypropyl]-L-histidyl-[translation elongation factor 2] + 3 S-adenosyl-L-methionine = diphthine-[translation elongation factor 2] + 3 S-adenosyl-L-homocysteine + 3 H(+). It participates in protein modification; peptidyl-diphthamide biosynthesis. In terms of biological role, S-adenosyl-L-methionine-dependent methyltransferase that catalyzes the trimethylation of the amino group of the modified target histidine residue in translation elongation factor 2 (EF-2), to form an intermediate called diphthine. The three successive methylation reactions represent the second step of diphthamide biosynthesis. In Methanococcus maripaludis (strain C7 / ATCC BAA-1331), this protein is Diphthine synthase.